Here is a 389-residue protein sequence, read N- to C-terminus: 8-amino-7-oxononanoate synthase (389 aa).

Arg18 contributes to the substrate binding site. A pyridoxal 5'-phosphate-binding site is contributed by 104-105; it reads GY. His129 is a binding site for substrate. The pyridoxal 5'-phosphate site is built by Ser176, His204, and Thr232. Lys235 carries the post-translational modification N6-(pyridoxal phosphate)lysine. Thr351 lines the substrate pocket.

Belongs to the class-II pyridoxal-phosphate-dependent aminotransferase family. BioF subfamily. In terms of assembly, homodimer. Requires pyridoxal 5'-phosphate as cofactor.

It carries out the reaction 6-carboxyhexanoyl-[ACP] + L-alanine + H(+) = (8S)-8-amino-7-oxononanoate + holo-[ACP] + CO2. It functions in the pathway cofactor biosynthesis; biotin biosynthesis. In terms of biological role, catalyzes the decarboxylative condensation of pimeloyl-[acyl-carrier protein] and L-alanine to produce 8-amino-7-oxononanoate (AON), [acyl-carrier protein], and carbon dioxide. This Citrifermentans bemidjiense (strain ATCC BAA-1014 / DSM 16622 / JCM 12645 / Bem) (Geobacter bemidjiensis) protein is 8-amino-7-oxononanoate synthase.